The sequence spans 562 residues: 4-coumarate--CoA ligase-like 9 (562 aa).

ATP-binding residues include serine 212, serine 213, glycine 214, threonine 215, threonine 216, and lysine 220. Residue arginine 281 participates in CoA binding. The segment at 283 to 352 is SBD1; that stretch reads ELEAMFKAVE…QKFPDVDIVQ (70 aa). Residues glutamine 352, glycine 353, threonine 357, aspartate 438, and arginine 453 each coordinate ATP. Positions 353 to 417 are SBD2; it reads GYGLTESSGP…LRGPVIMKGY (65 aa). 2 residues coordinate CoA: lysine 461 and alanine 462. Residue lysine 544 participates in ATP binding. The Microbody targeting signal motif lies at 560–562; it reads SKL.

It belongs to the ATP-dependent AMP-binding enzyme family. It depends on Mg(2+) as a cofactor. As to expression, expressed at low level in leaves.

The protein resides in the peroxisome. It carries out the reaction (9S,13S,15Z)-12-oxophyto-10,15-dienoate + ATP + CoA = (10Z,15Z)-12-oxophytodienoyl-CoA + AMP + diphosphate. It catalyses the reaction hexadecanoate + ATP + CoA = hexadecanoyl-CoA + AMP + diphosphate. The enzyme catalyses (9Z)-octadecenoate + ATP + CoA = (9Z)-octadecenoyl-CoA + AMP + diphosphate. The catalysed reaction is octadecanoate + ATP + CoA = octadecanoyl-CoA + AMP + diphosphate. It carries out the reaction tetradecanoate + ATP + CoA = tetradecanoyl-CoA + AMP + diphosphate. It catalyses the reaction dodecanoate + ATP + CoA = dodecanoyl-CoA + AMP + diphosphate. The enzyme catalyses decanoate + ATP + CoA = decanoyl-CoA + AMP + diphosphate. The catalysed reaction is octanoate + ATP + CoA = octanoyl-CoA + AMP + diphosphate. It carries out the reaction (9Z,12Z)-octadecadienoate + ATP + CoA = (9Z,12Z)-octadecadienoyl-CoA + AMP + diphosphate. It catalyses the reaction (9Z,12Z,15Z)-octadecatrienoate + ATP + CoA = (9Z,12Z,15Z)-octadecatrienoyl-CoA + AMP + diphosphate. The enzyme catalyses nonanoate + ATP + CoA = nonanoyl-CoA + AMP + diphosphate. In terms of biological role, contributes to jasmonic acid biosynthesis by initiating the beta-oxidative chain shortening of its precursors. Converts 12-oxo-phytodienoic acid (OPDA) into OPDA-CoA. Follows a two-step reaction mechanism, wherein the carboxylate substrate first undergoes adenylation by ATP, followed by a thioesterification in the presence of CoA to yield the final CoA thioester. The protein is 4-coumarate--CoA ligase-like 9 of Arabidopsis thaliana (Mouse-ear cress).